The primary structure comprises 345 residues: Phosphoribosylformylglycinamidine cyclo-ligase (345 aa).

This sequence belongs to the AIR synthase family.

Its subcellular location is the cytoplasm. It catalyses the reaction 2-formamido-N(1)-(5-O-phospho-beta-D-ribosyl)acetamidine + ATP = 5-amino-1-(5-phospho-beta-D-ribosyl)imidazole + ADP + phosphate + H(+). The protein operates within purine metabolism; IMP biosynthesis via de novo pathway; 5-amino-1-(5-phospho-D-ribosyl)imidazole from N(2)-formyl-N(1)-(5-phospho-D-ribosyl)glycinamide: step 2/2. This Aeromonas hydrophila subsp. hydrophila (strain ATCC 7966 / DSM 30187 / BCRC 13018 / CCUG 14551 / JCM 1027 / KCTC 2358 / NCIMB 9240 / NCTC 8049) protein is Phosphoribosylformylglycinamidine cyclo-ligase.